The following is a 344-amino-acid chain: AP2/ERF and B3 domain-containing transcription factor RAV1 (344 aa).

The segment covering 1–15 has biased composition (low complexity); sequence MESSSVDESTTSTGS. The disordered stretch occupies residues 1–22; it reads MESSSVDESTTSTGSICETPAI. Residues 61–116 constitute a DNA-binding region (AP2/ERF); the sequence is KYKGVVPQPNGRWGAQIYEKHQRVWLGTFNEEDEAARAYDVAVHRFRRRDAVTNFK. Positions 148–169 are disordered; it reads ELEQSKRRRNGNGNMTRTLLTS. Residues 188 to 292 constitute a DNA-binding region (TF-B3); that stretch reads FEKAVTPSDV…QLYIGWKSRS (105 aa).

The protein belongs to the AP2/ERF transcription factor family. RAV subfamily. Monomer. As to expression, expressed in all tissues examined: Roots, rosette leaves, cauline leaves, inflorescence stems, flowers and siliques. Highest expression in roots and rosette leaves. Very low expression in flowers.

Its subcellular location is the nucleus. Binds specifically to bipartite recognition sequences composed of two unrelated motifs, 5'-CAACA-3' and 5'-CACCTG-3'. May function as negative regulator of plant growth and development. The polypeptide is AP2/ERF and B3 domain-containing transcription factor RAV1 (RAV1) (Arabidopsis thaliana (Mouse-ear cress)).